Here is a 331-residue protein sequence, read N- to C-terminus: Protein mono-ADP-ribosyltransferase PARP11 (331 aa).

K11 carries the N6-(ADP-ribosyl)lysine modification. Residues 15-99 (SDVDDMDTSD…VTGKQRLIKR (85 aa)) form the WWE domain. 2 positions are modified to ADP-ribosylcysteine: C49 and C65. An ADP-ribosyl aspartic acid modification is found at D80. Residues 116-331 (IPMPTHWENV…IYPEYLIDFH (216 aa)) enclose the PARP catalytic domain.

Belongs to the ARTD/PARP family. Post-translationally, auto-mono-ADP-ribosylated. As to expression, predominantly expressed in testis, preferentially in postmeiotic germ cells. Also detectable in other tissues, including liver, lung, spleen, thymus and brain.

The protein localises to the nucleus. It is found in the nuclear pore complex. The catalysed reaction is L-aspartyl-[protein] + NAD(+) = 4-O-(ADP-D-ribosyl)-L-aspartyl-[protein] + nicotinamide. It carries out the reaction L-cysteinyl-[protein] + NAD(+) = S-(ADP-D-ribosyl)-L-cysteinyl-[protein] + nicotinamide + H(+). It catalyses the reaction L-glutamyl-[protein] + NAD(+) = 5-O-(ADP-D-ribosyl)-L-glutamyl-[protein] + nicotinamide. The enzyme catalyses L-lysyl-[protein] + NAD(+) = N(6)-(ADP-D-ribosyl)-L-lysyl-[protein] + nicotinamide + H(+). In terms of biological role, mono-ADP-ribosyltransferase that mediates mono-ADP-ribosylation of target proteins. Plays a role in nuclear envelope stability and nuclear remodeling during spermiogenesis. Inhibits the type I interferon activated signaling pathway. Mechanistically, mono-ADP-ribosylates beta-TrCP/BTRC to promote IFNAR1 ubiquitination and protect BTRC from ubiquitin-proteasome degradation. The polypeptide is Protein mono-ADP-ribosyltransferase PARP11 (Mus musculus (Mouse)).